A 210-amino-acid chain; its full sequence is Pyridoxine/pyridoxamine 5'-phosphate oxidase (210 aa).

Substrate contacts are provided by residues 7–10 and Lys-65; that span reads REDY. FMN contacts are provided by residues 60–65, 75–76, Arg-81, Lys-82, and Gln-104; these read RMVLLK and FT. Substrate is bound by residues Tyr-122, Arg-126, and Ser-130. Residues 139-140 and Trp-183 contribute to the FMN site; that span reads QS. 189–191 contacts substrate; it reads RLH. An FMN-binding site is contributed by Arg-193.

This sequence belongs to the pyridoxamine 5'-phosphate oxidase family. In terms of assembly, homodimer. It depends on FMN as a cofactor.

The enzyme catalyses pyridoxamine 5'-phosphate + O2 + H2O = pyridoxal 5'-phosphate + H2O2 + NH4(+). It carries out the reaction pyridoxine 5'-phosphate + O2 = pyridoxal 5'-phosphate + H2O2. Its pathway is cofactor metabolism; pyridoxal 5'-phosphate salvage; pyridoxal 5'-phosphate from pyridoxamine 5'-phosphate: step 1/1. The protein operates within cofactor metabolism; pyridoxal 5'-phosphate salvage; pyridoxal 5'-phosphate from pyridoxine 5'-phosphate: step 1/1. Functionally, catalyzes the oxidation of either pyridoxine 5'-phosphate (PNP) or pyridoxamine 5'-phosphate (PMP) into pyridoxal 5'-phosphate (PLP). The protein is Pyridoxine/pyridoxamine 5'-phosphate oxidase of Neisseria meningitidis serogroup C (strain 053442).